The chain runs to 632 residues: Myrcene synthase TPS3FN, chloroplastic (632 aa).

The N-terminal 55 residues, 1-55, are a transit peptide targeting the chloroplast; the sequence is MHCMAVHQFSPSIVSSLPTISTYNNNHFCRFFTPKTSISPISKTKSKSSTCYPIQ. The (2E)-geranyl diphosphate site is built by Arg-343, Asp-380, Asp-384, Arg-524, and Asp-527. Mg(2+)-binding residues include Asp-380 and Asp-384. Positions 380–384 match the DDXXD motif motif; sequence DDIYD. Mg(2+) is bound by residues Asp-527, Thr-531, and Glu-535.

It belongs to the terpene synthase family. Tpsb subfamily. The cofactor is Mg(2+). Requires Mn(2+) as cofactor. Expressed in glandular trichomes two to four weeks after flowering onset.

The protein localises to the plastid. Its subcellular location is the chloroplast. It carries out the reaction (2E)-geranyl diphosphate = beta-myrcene + diphosphate. It participates in secondary metabolite biosynthesis; terpenoid biosynthesis. In terms of biological role, involved in monoterpene (C10) olefins biosynthesis, constituants of cannabinoids and terpenoids-rich resins. Catalyzes strictly the conversion of (2E)-geranyl diphosphate to beta-myrcene. The sequence is that of Myrcene synthase TPS3FN, chloroplastic from Cannabis sativa (Hemp).